The chain runs to 584 residues: Proline--tRNA ligase (584 aa).

This sequence belongs to the class-II aminoacyl-tRNA synthetase family. ProS type 1 subfamily. As to quaternary structure, homodimer.

Its subcellular location is the cytoplasm. It carries out the reaction tRNA(Pro) + L-proline + ATP = L-prolyl-tRNA(Pro) + AMP + diphosphate. In terms of biological role, catalyzes the attachment of proline to tRNA(Pro) in a two-step reaction: proline is first activated by ATP to form Pro-AMP and then transferred to the acceptor end of tRNA(Pro). As ProRS can inadvertently accommodate and process non-cognate amino acids such as alanine and cysteine, to avoid such errors it has two additional distinct editing activities against alanine. One activity is designated as 'pretransfer' editing and involves the tRNA(Pro)-independent hydrolysis of activated Ala-AMP. The other activity is designated 'posttransfer' editing and involves deacylation of mischarged Ala-tRNA(Pro). The misacylated Cys-tRNA(Pro) is not edited by ProRS. This chain is Proline--tRNA ligase, found in Mycobacterium sp. (strain KMS).